We begin with the raw amino-acid sequence, 1955 residues long: MSATRGGPDQGPSQPQQRRIIRTQTAGNLGESFDSEVVPSSLVEIAPILRVANEVESSNPRVAYLCRFYAFEKAHRLDPTSSGRGVRQFKTALLQRLEREHDPTLMGRVKKSDAREMQSFYQHYYKKYIQALHNAADKADRAQLTKAYQTANVLFEVLKAVNLTQSIEVDREILEAQDKVAEKTQLYVPYNILPLDPDSANQAIMRYPEIQAAVLALRNTRGLPWPEGHKKKKDEDMLDWLQEMFGFQKDNVANQREHLILLLANVHIRQFPKPDQQPKLDDQALTEVMKKLFKNYKKWCKYLGRKSSLWLPTIQQEMQQRKLLYMALYLLIWGEAANLRFMPECLCYIYHHMAFELYGMLAGNVSPMTGENVKPAYGGEEDAFLRKVVTPIYEVIQMEAQRSKKGKSKHSQWRNYDDLNEYFWSVDCFRLGWPMRADADFFCLPVAVPNTEKDGDNSKPIVARDRWVGKVNFVEIRSFWHVFRSFDRMWSFYILCLQAMIIMAWDGGQPSSVFGADVFKKVLSVFITAAIMKLGQAVLDVILNFKAHQSMTLHVKLRYILKVFSAAAWVIILPVTYAYSWKDPPAFARTIKSWFGSAMHSPSLFIIAVVSYLSPNMLAGVMFLFPLLRRFLERSNYRIVMLMMWWSQPRLYVGRGMHESAFSLFKYTMFWVLLIATKLAFSYYIEIRPLVAPTQAIMKARVTNFQWHEFFPRAKNNIGVVIALWAPIILVYFMDSQIWYAIFSTLFGGIYGAFRRLGEIRTLGMLRSRFESLPGAFNDRLIPDGKNQQKKKGIRATLSHNFTEDKVPVNKEKEAARFAQLWNTIISSFREEDLISDREMDLLLVPYWADRDLDLIQWPPFLLASKIPIALDMAKDSNGKDRELKKRIESDTYMKCAVRECYASFKNIIKFVVQGNREKEVIEIIFAEVDKHIDTGDLIQEYKMSALPSLYDHFVKLIKYLLDNKEEDRDHVVILFQDMLEVVTRDIMMEDYNISSLVDSSHGGTWHGGMIPLEQQYQLFASSGAIRFPIEPVTEAWKEKIKRIYLLLTTKESAMDVPSNLEARRRISFFSNSLFMDMPMAPKVRNMLSFSVLTPYYTEEVLFSLRDLETPNEDGVSILFYLQKIFPDEWNNFLERVKCLSEEELKESDELEEELRLWASYRGQTLTRTVRGMMYYRKALELQAFLDMAMHEDLMEGYKAVELNSENNSRGERSLWAQCQAVADMKFTYVVSCQQYGIHKRSGDPRAQDILRLMTRYPSLRVAYIDEVEEPVKDKSKKGNQKVYYSVLVKVPKSTDHSTLAQNLDQVIYRIRLPGPAILGEGKPENQNHAIIFSRGEGLQTIDMNQDNYMEEALKMRNLLQEFLTKHDGVRHPSILGLREHIFTGSVSSLAWFMSNQETSFVTIGQRLLANPLRVRFHYGHPDVFDRLFHLTRGGVSKASKVINLSEDIFAGFNSTLREGNVTHHEYIQVGKGRDVGLNQISMFEAKIANGNGEQTLSRDIYRLGHRFDFFRMMSCYFTTVGFYFSTLITVLTVYIFLYGRLYLVLSGLEQGLSTQKGIRDNTPLQIALASQSFVQIGFLMALPMLMEIGLERGFRTALSEFVLMQLQLAPVFFTFSLGTKTHYYGRTLLHGGAKYRSTGRGFVVFHAKFADNYRLYSRSHFVKGLEMMLLLVVYQIFGSAYRGVLAYLLITISMWFMVGTWLFAPFLFNPSGFEWQKIVDDWTDWNKWINNIGGIGVPAEKSWESWWEEEQEHLRYSGKRGIVVEILLALRFFIYQYGLVYHLTITEKTKNFLVYGVSWLVIFLILFVMKTVSVGRRRFSASFQLMFRLIKGLIFMTFIAIIVILITLAHMTIQDIIVCILAFMPTGWGMLLIAQACKPVVHRAGFWGSVRTLARGYEIVMGLLLFTPVAFLAWFPFVSEFQTRMLFNQAFSRGLQISRILGGHRKDRSSRNKE.

Residues 1–488 (MSATRGGPDQ…FWHVFRSFDR (488 aa)) are Cytoplasmic-facing. Residues 489–509 (MWSFYILCLQAMIIMAWDGGQ) traverse the membrane as a helical segment. At 510–521 (PSSVFGADVFKK) the chain is on the extracellular side. A helical transmembrane segment spans residues 522 to 542 (VLSVFITAAIMKLGQAVLDVI). Over 543 to 558 (LNFKAHQSMTLHVKLR) the chain is Cytoplasmic. The chain crosses the membrane as a helical span at residues 559 to 579 (YILKVFSAAAWVIILPVTYAY). The Extracellular portion of the chain corresponds to 580–604 (SWKDPPAFARTIKSWFGSAMHSPSL). A helical transmembrane segment spans residues 605-625 (FIIAVVSYLSPNMLAGVMFLF). Over 626–660 (PLLRRFLERSNYRIVMLMMWWSQPRLYVGRGMHES) the chain is Cytoplasmic. The chain crosses the membrane as a helical span at residues 661 to 681 (AFSLFKYTMFWVLLIATKLAF). Residues 682-717 (SYYIEIRPLVAPTQAIMKARVTNFQWHEFFPRAKNN) are Extracellular-facing. A helical transmembrane segment spans residues 718-738 (IGVVIALWAPIILVYFMDSQI). Residues 739 to 1517 (WYAIFSTLFG…FDFFRMMSCY (779 aa)) lie on the Cytoplasmic side of the membrane. Residues 1518 to 1538 (FTTVGFYFSTLITVLTVYIFL) traverse the membrane as a helical segment. Residues 1539–1566 (YGRLYLVLSGLEQGLSTQKGIRDNTPLQ) lie on the Extracellular side of the membrane. The chain crosses the membrane as a helical span at residues 1567 to 1587 (IALASQSFVQIGFLMALPMLM). The Cytoplasmic portion of the chain corresponds to 1588–1597 (EIGLERGFRT). A helical transmembrane segment spans residues 1598 to 1618 (ALSEFVLMQLQLAPVFFTFSL). Topologically, residues 1619–1661 (GTKTHYYGRTLLHGGAKYRSTGRGFVVFHAKFADNYRLYSRSH) are extracellular. Residues 1662–1682 (FVKGLEMMLLLVVYQIFGSAY) traverse the membrane as a helical segment. At 1683-1688 (RGVLAY) the chain is on the cytoplasmic side. A helical membrane pass occupies residues 1689–1709 (LLITISMWFMVGTWLFAPFLF). The Extracellular segment spans residues 1710-1761 (NPSGFEWQKIVDDWTDWNKWINNIGGIGVPAEKSWESWWEEEQEHLRYSGKR). A helical transmembrane segment spans residues 1762 to 1782 (GIVVEILLALRFFIYQYGLVY). Topologically, residues 1783 to 1792 (HLTITEKTKN) are cytoplasmic. Residues 1793–1813 (FLVYGVSWLVIFLILFVMKTV) form a helical membrane-spanning segment. Over 1814–1833 (SVGRRRFSASFQLMFRLIKG) the chain is Extracellular. The chain crosses the membrane as a helical span at residues 1834–1854 (LIFMTFIAIIVILITLAHMTI). Residues 1855–1856 (QD) lie on the Cytoplasmic side of the membrane. A helical membrane pass occupies residues 1857 to 1877 (IIVCILAFMPTGWGMLLIAQA). The Extracellular segment spans residues 1878–1899 (CKPVVHRAGFWGSVRTLARGYE). A helical transmembrane segment spans residues 1900–1920 (IVMGLLLFTPVAFLAWFPFVS). At 1921–1955 (EFQTRMLFNQAFSRGLQISRILGGHRKDRSSRNKE) the chain is on the cytoplasmic side.

Belongs to the glycosyltransferase 48 family.

It is found in the cell membrane. It carries out the reaction [(1-&gt;3)-beta-D-glucosyl](n) + UDP-alpha-D-glucose = [(1-&gt;3)-beta-D-glucosyl](n+1) + UDP + H(+). Functionally, involved in callose synthesis at the forming cell plate during cytokinesis. During plant growth and development, callose is found as a transitory component of the cell plate in dividing cells, is a major component of pollen mother cell walls and pollen tubes, and is found as a structural component of plasmodesmatal canals. The sequence is that of Callose synthase 3 (CALS3) from Arabidopsis thaliana (Mouse-ear cress).